An 892-amino-acid chain; its full sequence is NACHT, LRR and PYD domains-containing protein 6 (892 aa).

Residues 1–103 (MDQPEAPCSS…AAQLQERRLQ (103 aa)) enclose the Pyrin domain. Positions 158–181 (APEEAMGPAEEPEPGRARRSDTHT) are disordered. Basic and acidic residues predominate over residues 170-181 (EPGRARRSDTHT). The 318-residue stretch at 196–513 (LTVVLQGPAG…EFLAALSYLL (318 aa)) folds into the NACHT domain. 202 to 209 (GPAGIGKT) contacts ATP. The segment at 352 to 356 (KDKKK) is disordered. The stretch at 462-487 (EKELEQLELRGSKVQTLFLSKKELPG) is one LRR 1 repeat. The tract at residues 590–614 (APEVTEGAKGLEDTEEPEEEEEGEE) is disordered. Positions 602–614 (DTEEPEEEEEGEE) are enriched in acidic residues. LRR repeat units follow at residues 727-747 (LCHL…VCRD), 755-778 (APAL…MLSE), 811-834 (SPAL…YLCA), and 845-868 (TLSL…KRAK).

The protein belongs to the NLRP family. As to quaternary structure, homomultimer; forms the NLRP6 inflammasome polymeric complex, a filament composed of homopolymers in response to pathogens and other damage-associated signals. The core of NLRP6 inflammasomes consists of a signal sensor component (NLRP6), an adapter (PYCARD/ASC), which recruits effector pro-inflammatory caspases (CASP1 and CASP4). Interacts (via pyrin domain) with PYCARD/ASC (via pyrin domain); interaction takes place following NLRP6 activation and formation of liquid-liquid phase separation (LLPS), initiating nucleation which greatly enhances further addition of soluble PYCARD/ASC molecules to the speck in a prion-like polymerization process. Clustered PYCARD/ASC nucleates the formation of CASP1 (or possibly CASP4) filaments through the interaction of their respective CARD domains, acting as a platform for CASP1 polymerization. CASP1 filament formation increases local enzyme concentration, resulting in trans-autocleavage and activation. Active CASP1 then processes IL1B and IL18 precursors, leading to the release of mature cytokines in the extracellular milieu and inflammatory response. Interacts with DHX15. Polyubiquitinated with 'Lys-63'-linked chains, promoting the interaction with PYCARD/ASC and formation of the NLRP6 inflammasome. Deubiquitination by CYLD decreases the interaction with PYCARD/ASC. In terms of tissue distribution, expressed in peripheral blood leukocytes, predominantly in granulocytes and, at lower levels, in CD4(+) and CD8(+) T-cells. Expressed in colonic myofibroblasts (at protein level).

It localises to the cytoplasm. The protein resides in the cytosol. The protein localises to the inflammasome. Its subcellular location is the cell membrane. It is found in the nucleus membrane. Acts as the sensor component of the NLRP6 inflammasome, which mediates inflammasome activation in response to various pathogen-associated signals, leading to maturation and secretion of IL1B and IL18. Inflammasomes are supramolecular complexes that assemble in the cytosol in response to pathogens and other damage-associated signals and play critical roles in innate immunity and inflammation. Acts as a recognition receptor (PRR): recognizes and binds specific pathogens and other damage-associated signals, such as lipoteichoic acid (LTA), a cell-wall component of Gram-positive bacteria, or double stranded RNA (dsRNA). May also recognize and bind lipopolysaccharide (LPS), a major component of the outer membrane of Gram-negative bacteria; however, LPS is probably not a major activator of the NLRP6 inflammasome. Following LTA- or dsRNA-binding, NLRP6 undergoes liquid-liquid phase separation (LLPS), enhancing multivalent interactions, an essential step for the formation of the NLRP6 inflammasome polymeric complex. The NLRP6 inflammasome acts by promoting recruitment of effector pro-inflammatory caspases (CASP1 and/or CASP4) that catalyze maturation and secretion of IL1B and IL18 in the extracellular milieu. The NLRP6 inflammasome plays a central role in the maintenance of epithelial integrity and host defense against microbial infections in the intestine. Required to restrict infection against Gram-positive bacteria by recognizing lipoteichoic acid (LTA), leading to recruitment of CASP4 and CASP1, and subsequent maturation and secretion of IL1B and IL18. Involved in intestinal antiviral innate immunity together with DHX15: recognizes and binds viral dsRNA to restrict infection by enteric viruses through the interferon pathway and GSDMD-dependent release of IL18. Required to prevent infection by the apicomplexan parasite Cryptosporidium in enterocytes by promoting GSDMD-dependent release of IL18. The NLRP6 inflammasome may also regulate the gut microbiota composition by acting as a sensor of microbiota-associated metabolites to form a PYCARD/ASC-dependent inflammasome for downstream IL18 release and secretion of antimicrobial peptides. Essential for gut mucosal self-renewal and proliferation. Regulate mucus secretion in an inflammasome- and autophagy-dependent manner to prevent invasion by enteric bacteria,. During systemic bacterial infections, the NLRP6 inflammasome negatively regulates neutrophil recruitment and neutrophil extracellular traps (NETs) formation. May promote peripheral nerve recovery following injury via an inflammasome-independent mechanism. The polypeptide is NACHT, LRR and PYD domains-containing protein 6 (Homo sapiens (Human)).